A 280-amino-acid polypeptide reads, in one-letter code: Ribosomal RNA small subunit methyltransferase A (280 aa).

S-adenosyl-L-methionine is bound by residues H13, L15, G40, E61, D85, and N105.

Belongs to the class I-like SAM-binding methyltransferase superfamily. rRNA adenine N(6)-methyltransferase family. RsmA subfamily.

The protein resides in the cytoplasm. It carries out the reaction adenosine(1518)/adenosine(1519) in 16S rRNA + 4 S-adenosyl-L-methionine = N(6)-dimethyladenosine(1518)/N(6)-dimethyladenosine(1519) in 16S rRNA + 4 S-adenosyl-L-homocysteine + 4 H(+). In terms of biological role, specifically dimethylates two adjacent adenosines (A1518 and A1519) in the loop of a conserved hairpin near the 3'-end of 16S rRNA in the 30S particle. May play a critical role in biogenesis of 30S subunits. This chain is Ribosomal RNA small subunit methyltransferase A, found in Phocaeicola vulgatus (strain ATCC 8482 / DSM 1447 / JCM 5826 / CCUG 4940 / NBRC 14291 / NCTC 11154) (Bacteroides vulgatus).